Here is a 1062-residue protein sequence, read N- to C-terminus: Protein P1-P2 (1062 aa).

An N-terminal signal peptide occupies residues 1–20 (MNRFTAYAALFFMFSLCSTA). 3 helical membrane passes run 121–141 (AASV…WTLA), 144–164 (ITLF…LGCI), and 172–192 (ALSL…KIIW). One can recognise a Peptidase S39 domain in the interval 207 to 399 (VEGYKGFSVP…GITSPNYVFE (193 aa)). Residues histidine 255, aspartate 286, and serine 354 each act as for protease activity in the active site. The tract at residues 455–560 (ATNAPAEKTA…QTKEARKAWR (106 aa)) is disordered. Residues 463–484 (TAQTNSAEKTAPSTSAEKTALT) are compositionally biased toward polar residues. Positions 497–511 (QNKRQLRHPRRRYKR) are enriched in basic residues. Residues 551-560 (QTKEARKAWR) show a composition bias toward basic and acidic residues. The 116-residue stretch at 859-974 (EYTRPTDCSG…APNSDLEEYK (116 aa)) folds into the RdRp catalytic domain.

Specific enzymatic cleavages in vivo yield mature proteins. The protease probably cleaves itself and releases the RdRp (Potential). Cleavages have been shown in the P1 protein, but since the N-terminus containing the serine protease is shared between P1 and P1-P2, cleavages should also occur within the P1-P2 protein.

It is found in the membrane. The enzyme catalyses RNA(n) + a ribonucleoside 5'-triphosphate = RNA(n+1) + diphosphate. Functionally, precursor from which the RNA-dependent RNA polymerase (RdRp) is probably released. RNA-dependent RNA polymerase plays an essential role in virus replication (Potential). This is Protein P1-P2 from Potato leafroll virus (strain Potato/Scotland/strain 1/1984) (PLrV).